A 284-amino-acid polypeptide reads, in one-letter code: Tropomyosin (284 aa).

Residues 1 to 47 are disordered; it reads MDAIKKKMQAMKIEKDNAMDRADAAEEKARQQQERVEKLEEELRDTQ. Residues 1 to 284 are a coiled coil; it reads MDAIKKKMQA…DQTFQELSGY (284 aa). Residues 12 to 38 show a composition bias toward basic and acidic residues; sequence KIEKDNAMDRADAAEEKARQQQERVEK.

Belongs to the tropomyosin family. Homodimer.

Tropomyosin, in association with the troponin complex, plays a central role in the calcium dependent regulation of muscle contraction. This Trichinella pseudospiralis (Parasitic roundworm) protein is Tropomyosin.